An 843-amino-acid chain; its full sequence is Protein P (843 aa).

Residues M1 to Q177 are terminal protein domain (TP). Positions E178 to I346 are spacer. Disordered stretches follow at residues S221–S240 and V289–Q315. Over residues L223 to L235 the composition is skewed to low complexity. Residues D347–Q690 form a polymerase/reverse transcriptase domain (RT) region. The Reverse transcriptase domain maps to E357 to I600. Positions 429, 551, and 552 each coordinate Mg(2+).

The protein belongs to the hepadnaviridae P protein family.

It catalyses the reaction DNA(n) + a 2'-deoxyribonucleoside 5'-triphosphate = DNA(n+1) + diphosphate. The catalysed reaction is Endonucleolytic cleavage to 5'-phosphomonoester.. With respect to regulation, activated by host HSP70 and HSP40 in vitro to be able to bind the epsilon loop of the pgRNA. Because deletion of the RNase H region renders the protein partly chaperone-independent, the chaperones may be needed indirectly to relieve occlusion of the RNA-binding site by this domain. Inhibited by several reverse-transcriptase inhibitors: Lamivudine, Adefovir and Entecavir. Functionally, multifunctional enzyme that converts the viral RNA genome into dsDNA in viral cytoplasmic capsids. This enzyme displays a DNA polymerase activity that can copy either DNA or RNA templates, and a ribonuclease H (RNase H) activity that cleaves the RNA strand of RNA-DNA heteroduplexes in a partially processive 3'- to 5'-endonucleasic mode. Neo-synthesized pregenomic RNA (pgRNA) are encapsidated together with the P protein, and reverse-transcribed inside the nucleocapsid. Initiation of reverse-transcription occurs first by binding the epsilon loop on the pgRNA genome, and is initiated by protein priming, thereby the 5'-end of (-)DNA is covalently linked to P protein. Partial (+)DNA is synthesized from the (-)DNA template and generates the relaxed circular DNA (RC-DNA) genome. After budding and infection, the RC-DNA migrates in the nucleus, and is converted into a plasmid-like covalently closed circular DNA (cccDNA). The activity of P protein does not seem to be necessary for cccDNA generation, and is presumably released from (+)DNA by host nuclear DNA repair machinery. The polypeptide is Protein P (Homo sapiens (Human)).